The sequence spans 397 residues: Acetate kinase (397 aa).

Mg(2+) is bound at residue Asn8. An ATP-binding site is contributed by Lys15. A substrate-binding site is contributed by Arg89. Asp146 acts as the Proton donor/acceptor in catalysis. Residues 206 to 210, 283 to 285, and 331 to 335 each bind ATP; these read HVGNG, DMR, and GMGEN. Glu383 is a Mg(2+) binding site.

This sequence belongs to the acetokinase family. In terms of assembly, homodimer. Requires Mg(2+) as cofactor. The cofactor is Mn(2+).

The protein resides in the cytoplasm. The enzyme catalyses acetate + ATP = acetyl phosphate + ADP. The protein operates within metabolic intermediate biosynthesis; acetyl-CoA biosynthesis; acetyl-CoA from acetate: step 1/2. Its function is as follows. Catalyzes the formation of acetyl phosphate from acetate and ATP. Can also catalyze the reverse reaction. This chain is Acetate kinase, found in Streptococcus agalactiae serotype Ia (strain ATCC 27591 / A909 / CDC SS700).